Here is a 469-residue protein sequence, read N- to C-terminus: 3-isopropylmalate dehydratase large subunit (469 aa).

[4Fe-4S] cluster is bound by residues C347, C407, and C410. Polar residues predominate over residues 424 to 441; the sequence is SASSSNRNFKGRQGSPSG. A disordered region spans residues 424-443; the sequence is SASSSNRNFKGRQGSPSGRT.

This sequence belongs to the aconitase/IPM isomerase family. LeuC type 1 subfamily. In terms of assembly, heterodimer of LeuC and LeuD. [4Fe-4S] cluster is required as a cofactor.

The catalysed reaction is (2R,3S)-3-isopropylmalate = (2S)-2-isopropylmalate. The protein operates within amino-acid biosynthesis; L-leucine biosynthesis; L-leucine from 3-methyl-2-oxobutanoate: step 2/4. Catalyzes the isomerization between 2-isopropylmalate and 3-isopropylmalate, via the formation of 2-isopropylmaleate. The polypeptide is 3-isopropylmalate dehydratase large subunit (Prochlorococcus marinus (strain MIT 9312)).